The sequence spans 352 residues: C-X-C chemokine receptor type 4 (352 aa).

The important for chemokine binding and signaling stretch occupies residues 1–21; that stretch reads MEGISIYTSDNYTEEMGSGDY. The Extracellular segment spans residues 1-38; it reads MEGISIYTSDNYTEEMGSGDYDSIKEPCFREENAHFNR. A Sulfotyrosine modification is found at Tyr-7. Asn-11 is a glycosylation site (N-linked (GlcNAc...) asparagine). Tyr-12 is subject to Sulfotyrosine. Residue Ser-18 is glycosylated (O-linked (Xyl...) (chondroitin sulfate) serine). Residue Tyr-21 is modified to Sulfotyrosine. 2 disulfide bridges follow: Cys-28–Cys-274 and Cys-109–Cys-186. The chain crosses the membrane as a helical span at residues 39–63; sequence IFLPTIYSIIFLTGIVGNGLVILVM. The Cytoplasmic segment spans residues 64 to 77; sequence GYQKKLRSMTDKYR. The helical transmembrane segment at 78-99 threads the bilayer; the sequence is LHLSVADLLFVITLPFWAVDAV. The chemokine binding stretch occupies residues 94–97; it reads WAVD. Residues 100–110 are Extracellular-facing; sequence ANWYFGNFLCK. The helical transmembrane segment at 111–130 threads the bilayer; sequence AVHVIYTVNLYSSVLILAFI. Positions 113–117 are chemokine binding; sequence HVIYT. The Cytoplasmic portion of the chain corresponds to 131-154; that stretch reads SLDRYLAIVHATNSQRPRKLLAEK. The short motif at 133–135 is the Important for signaling element; it reads DRY. Residues 135–147 form an involved in dimerization; when bound to chemokine region; the sequence is YLAIVHATNSQRP. The chain crosses the membrane as a helical span at residues 155-174; the sequence is VVYVGVWIPALLLTIPDFIF. The Extracellular segment spans residues 175–195; sequence ASVSEADDRYICDRFYPNDLW. The chemokine binding, important for signaling stretch occupies residues 186 to 190; that stretch reads CDRFY. The involved in dimerization stretch occupies residues 191-210; it reads PNDLWVVVFQFQHIMVGLIL. A helical transmembrane segment spans residues 196–216; the sequence is VVVFQFQHIMVGLILPGIVIL. Residues 217–241 are Cytoplasmic-facing; the sequence is SCYCIIISKLSHSKGHQKRKALKTT. A helical transmembrane segment spans residues 242-261; that stretch reads VILILAFFACWLPYYIGISI. Topologically, residues 262–282 are extracellular; the sequence is DSFILLEIIKQGCEFENTVHK. An involved in dimerization region spans residues 266–268; sequence LLE. Residues 283–302 traverse the membrane as a helical segment; sequence WISITEALAFFHCCLNPILY. Over 303–352 the chain is Cytoplasmic; sequence AFLGAKFKTSAQHALTSVSRGSSLKILSKGKRGGHSSVSTESESSSFHSS. Phosphoserine occurs at positions 319 and 321. A phosphoserine; by PKC and GRK6 mark is found at Ser-324 and Ser-325. The segment at 329-352 is disordered; it reads LSKGKRGGHSSVSTESESSSFHSS. At Ser-330 the chain carries Phosphoserine; by GRK6. Lys-331 participates in a covalent cross-link: Glycyl lysine isopeptide (Lys-Gly) (interchain with G-Cter in ubiquitin). A compositionally biased stretch (low complexity) spans 337 to 352; sequence HSSVSTESESSSFHSS. Ser-339 bears the Phosphoserine; by GRK6 mark. Phosphoserine occurs at positions 348 and 351.

This sequence belongs to the G-protein coupled receptor 1 family. As to quaternary structure, monomer. Can form homodimers. Interacts with CD164. Interacts with ARRB2; the interaction is dependent on the C-terminal phosphorylation of CXCR4 and allows activation of MAPK1 and MAPK3. Interacts with ARR3; the interaction is dependent on the C-terminal phosphorylation of CXCR4 and modulates calcium mobilization. Interacts with RNF113A; the interaction, enhanced by CXCL12, promotes CXCR4 ubiquitination and subsequent degradation. Interacts (via the cytoplasmic C-terminal) with ITCH (via the WW domains I and II); the interaction, enhanced by CXCL12, promotes CXCR4 ubiquitination and leads to its degradation. Interacts with extracellular ubiquitin. Interacts with DBN1; this interaction is enhanced by antigenic stimulation. Following LPS binding, may form a complex with GDF5, HSP90AA1 and HSPA8. Phosphorylated on agonist stimulation. Rapidly phosphorylated on serine and threonine residues in the C-terminal. Phosphorylation at Ser-324 and Ser-325 leads to recruitment of ITCH, ubiquitination and protein degradation. Post-translationally, ubiquitinated after ligand binding, leading to its degradation. Ubiquitinated by ITCH at the cell membrane on agonist stimulation. The ubiquitin-dependent mechanism, endosomal sorting complex required for transport (ESCRT), then targets CXCR4 for lysosomal degradation. This process is dependent also on prior Ser-/Thr-phosphorylation in the C-terminal of CXCR4. Also binding of ARRB1 to STAM negatively regulates CXCR4 sorting to lysosomes though modulating ubiquitination of SFR5S. In terms of processing, sulfation is required for efficient binding of CXCL12/SDF-1alpha and promotes its dimerization. O- and N-glycosylated. N-glycosylation can mask coreceptor function. The O-glycosylation chondroitin sulfate attachment does not affect interaction with CXCL12/SDF-1alpha nor its coreceptor activity.

Its subcellular location is the cell membrane. It is found in the cell junction. The protein localises to the early endosome. The protein resides in the late endosome. It localises to the lysosome. Receptor for the C-X-C chemokine CXCL12/SDF-1 that transduces a signal by increasing intracellular calcium ion levels and enhancing MAPK1/MAPK3 activation. Involved in the AKT signaling cascade. Plays a role in regulation of cell migration, e.g. during wound healing. Acts as a receptor for extracellular ubiquitin; leading to enhanced intracellular calcium ions and reduced cellular cAMP levels. Binds bacterial lipopolysaccharide (LPS) et mediates LPS-induced inflammatory response, including TNF secretion by monocytes. Involved in hematopoiesis and in cardiac ventricular septum formation. Also plays an essential role in vascularization of the gastrointestinal tract, probably by regulating vascular branching and/or remodeling processes in endothelial cells. Involved in cerebellar development. In the CNS, could mediate hippocampal-neuron survival. In Papio anubis (Olive baboon), this protein is C-X-C chemokine receptor type 4 (CXCR4).